The primary structure comprises 228 residues: uncharacterized protein (228 aa).

A signal peptide spans 1 to 23; the sequence is MIRHTRLLLASLCLIATGARASA.

This is an uncharacterized protein from Methylorubrum extorquens (strain ATCC 14718 / DSM 1338 / JCM 2805 / NCIMB 9133 / AM1) (Methylobacterium extorquens).